The sequence spans 86 residues: Small ribosomal subunit protein bS16 (86 aa).

The protein belongs to the bacterial ribosomal protein bS16 family.

The polypeptide is Small ribosomal subunit protein bS16 (Borreliella burgdorferi (strain ATCC 35210 / DSM 4680 / CIP 102532 / B31) (Borrelia burgdorferi)).